The sequence spans 630 residues: Zinc finger protein MSN4 (630 aa).

Met1 is modified (N-acetylmethionine). Over residues 37 to 56 (TTNVSATSSNDNSANNSISS) the composition is skewed to low complexity. Disordered stretches follow at residues 37 to 77 (TTNV…ATNT) and 115 to 137 (FVND…DKIY). Ser178 is subject to Phosphoserine. The short motif at 237 to 245 (SILEDFVSS) is the 9aaTAD element. Ser263 carries the post-translational modification Phosphoserine. Polar residues predominate over residues 292 to 303 (KNSSNSKPTQQI). Disordered stretches follow at residues 292–322 (KNSS…SPTT) and 360–379 (SISS…RQQR). Residues Ser316 and Ser319 each carry the phosphoserine modification. Over residues 360 to 373 (SISSSLNRISHSSS) the composition is skewed to low complexity. Thr479 carries the post-translational modification Phosphothreonine. Positions 502 to 566 (TSQAHHAAQH…KSITTIDPNN (65 aa)) are disordered. Residues 504–515 (QAHHAAQHHQQQ) are compositionally biased toward low complexity. Polar residues-rich tracts occupy residues 516–525 (PTKQATVSPN) and 532–547 (SSVT…NNNG). At Ser558 the chain carries Phosphoserine. 2 C2H2-type zinc fingers span residues 573 to 596 (FKCK…RSVH) and 602 to 624 (FACM…LKTH).

The protein localises to the cytoplasm. It localises to the nucleus. Its function is as follows. Positive transcriptional factor that acts as a component of the stress responsive system. Recognizes and binds to the stress response element (STRE) which is involved in the response to various forms of stress (heat, oxidative, osmotic, etc.). Involved in the regulation of the CTT1, DDR2, HSP12 genes. This is Zinc finger protein MSN4 (MSN4) from Saccharomyces cerevisiae (strain ATCC 204508 / S288c) (Baker's yeast).